The chain runs to 381 residues: Guanine nucleotide-binding protein G(olf) subunit alpha (381 aa).

The interval 1–25 is disordered; the sequence is MGCLGGNSKTTEDQGVDEKERREAN. Residue glycine 2 is the site of N-palmitoyl glycine attachment. Cysteine 3 carries the S-palmitoyl cysteine lipid modification. A compositionally biased stretch (basic and acidic residues) spans 10-25; it reads TTEDQGVDEKERREAN. The G-alpha domain maps to 41–381; sequence ATHRLLLLGA…RMHLKQYELL (341 aa). The tract at residues 44–57 is G1 motif; it reads RLLLLGAGESGKST. GTP-binding residues include glutamate 52, serine 53, glycine 54, lysine 55, serine 56, and threonine 57. Serine 56 contacts Mg(2+). Threonine 178 carries the post-translational modification Phosphothreonine. Residues 183 to 191 are G2 motif; that stretch reads DLLRCRVLT. Residues leucine 185 and arginine 186 each contribute to the GTP site. Position 188 is an ADP-ribosylarginine; by cholera toxin (arginine 188). A GTP-binding site is contributed by threonine 191. Mg(2+) contacts are provided by threonine 191 and aspartate 210. Residues 206–215 form a G3 motif region; that stretch reads FHMFDVGGQR. GTP is bound by residues glycine 213, asparagine 279, lysine 280, aspartate 282, and alanine 353. A G4 motif region spans residues 275–282; the sequence is ILFLNKQD. The segment at 351-356 is G5 motif; the sequence is TCAVDT.

Belongs to the G-alpha family. G(s) subfamily. As to quaternary structure, g proteins are composed of 3 units; alpha, beta and gamma. The alpha chain contains the guanine nucleotide binding site. Interacts with GAS2L2. Interacts (GDP-bound form) with RIC8B (via C-terminus); promoting GNAL folding and association with the plasma membrane. In terms of tissue distribution, detected in olfactory neuroepithelium, brain, testis, and to a lower extent in retina, lung alveoli, spleen. Trace amounts where seen in kidney, adrenal gland and liver. Found to be expressed in all the insulinomas examined.

The protein localises to the cell membrane. The enzyme catalyses GTP + H2O = GDP + phosphate + H(+). Guanine nucleotide-binding protein (G protein) involved as transducer in olfactory signal transduction controlled by G protein-coupled receptors (GPCRs). Contains the guanine nucleotide binding site and alternates between an active, GTP-bound state and an inactive, GDP-bound state. Signaling by an activated GPCR promotes GDP release and GTP binding. The alpha subunit has a low GTPase activity that converts bound GTP to GDP, thereby terminating the signal. Both GDP release and GTP hydrolysis are modulated by numerous regulatory proteins. GNAL/G(olf) alpha specifically mediates olfactory signal transduction within the olfactory neuroepithelium and the basal ganglia following GPCRs activation. Acts by promoting the specific activation of adenylyl cyclase ADCY3, resulting in increased levels of the signaling molecule cAMP. The chain is Guanine nucleotide-binding protein G(olf) subunit alpha from Homo sapiens (Human).